A 335-amino-acid polypeptide reads, in one-letter code: Dihydroorotate dehydrogenase (quinone) (335 aa).

Residues 58 to 62 and threonine 82 each bind FMN; that span reads AGADK. Lysine 62 serves as a coordination point for substrate. 107–111 lines the substrate pocket; the sequence is NRNGF. 2 residues coordinate FMN: asparagine 135 and asparagine 168. A substrate-binding site is contributed by asparagine 168. Serine 171 functions as the Nucleophile in the catalytic mechanism. Residue asparagine 173 coordinates substrate. Positions 213 and 241 each coordinate FMN. Position 242-243 (242-243) interacts with substrate; the sequence is NT. FMN contacts are provided by residues glycine 264, glycine 293, and 314 to 315; that span reads YS.

This sequence belongs to the dihydroorotate dehydrogenase family. Type 2 subfamily. In terms of assembly, monomer. FMN serves as cofactor.

It localises to the cell membrane. The catalysed reaction is (S)-dihydroorotate + a quinone = orotate + a quinol. It functions in the pathway pyrimidine metabolism; UMP biosynthesis via de novo pathway; orotate from (S)-dihydroorotate (quinone route): step 1/1. Catalyzes the conversion of dihydroorotate to orotate with quinone as electron acceptor. The polypeptide is Dihydroorotate dehydrogenase (quinone) (Haemophilus ducreyi (strain 35000HP / ATCC 700724)).